We begin with the raw amino-acid sequence, 378 residues long: Chaperone protein DnaJ (378 aa).

In terms of domain architecture, J spans 6–70 (DYYDVLGVSR…QKRQQYDQFG (65 aa)). A CR-type zinc finger spans residues 137–219 (GKTSEISYSR…CHGKGVKTQK (83 aa)). Zn(2+) is bound by residues C150, C153, C167, C170, C193, C196, C207, and C210. CXXCXGXG motif repeat units follow at residues 150–157 (CEVCKGSG), 167–174 (CDKCGGSG), 193–200 (CDKCAGSG), and 207–214 (CHNCHGKG).

Belongs to the DnaJ family. In terms of assembly, homodimer. Zn(2+) is required as a cofactor.

It localises to the cytoplasm. Its function is as follows. Participates actively in the response to hyperosmotic and heat shock by preventing the aggregation of stress-denatured proteins and by disaggregating proteins, also in an autonomous, DnaK-independent fashion. Unfolded proteins bind initially to DnaJ; upon interaction with the DnaJ-bound protein, DnaK hydrolyzes its bound ATP, resulting in the formation of a stable complex. GrpE releases ADP from DnaK; ATP binding to DnaK triggers the release of the substrate protein, thus completing the reaction cycle. Several rounds of ATP-dependent interactions between DnaJ, DnaK and GrpE are required for fully efficient folding. Also involved, together with DnaK and GrpE, in the DNA replication of plasmids through activation of initiation proteins. The chain is Chaperone protein DnaJ from Lactobacillus delbrueckii subsp. bulgaricus (strain ATCC BAA-365 / Lb-18).